The sequence spans 201 residues: Desiccation-related protein PCC3-06 (201 aa).

Polar residues predominate over residues 41–54; sequence TVASQSQGRQQVSE. 2 disordered regions span residues 41 to 155 and 177 to 201; these read TVAS…QNVK and MGKS…TNYF. Basic and acidic residues-rich tracts occupy residues 57 to 76, 108 to 144, and 177 to 193; these read EDAK…KTSE, GELK…ERVA, and MGKS…ETKK.

The protein belongs to the LEA type 1 family.

This Craterostigma plantagineum (Blue gem) protein is Desiccation-related protein PCC3-06.